The chain runs to 131 residues: Small ribosomal subunit protein uS12 (131 aa).

Asp89 carries the 3-methylthioaspartic acid modification.

Belongs to the universal ribosomal protein uS12 family. Part of the 30S ribosomal subunit. Contacts proteins S8 and S17. May interact with IF1 in the 30S initiation complex.

Functionally, with S4 and S5 plays an important role in translational accuracy. Interacts with and stabilizes bases of the 16S rRNA that are involved in tRNA selection in the A site and with the mRNA backbone. Located at the interface of the 30S and 50S subunits, it traverses the body of the 30S subunit contacting proteins on the other side and probably holding the rRNA structure together. The combined cluster of proteins S8, S12 and S17 appears to hold together the shoulder and platform of the 30S subunit. This is Small ribosomal subunit protein uS12 from Campylobacter concisus (strain 13826).